A 199-amino-acid chain; its full sequence is Protein-methionine-sulfoxide reductase heme-binding subunit MsrQ (199 aa).

A run of 5 helical transmembrane segments spans residues 13–33 (VLLH…VDQG), 79–99 (LLGL…ALLE), 120–140 (LGII…QIMM), 147–167 (WQKL…HYLW), and 169–189 (VKTL…LLLL).

Belongs to the MsrQ family. Heterodimer of a catalytic subunit (MsrP) and a heme-binding subunit (MsrQ). The cofactor is FMN. Heme b is required as a cofactor.

The protein localises to the cell inner membrane. Part of the MsrPQ system that repairs oxidized periplasmic proteins containing methionine sulfoxide residues (Met-O), using respiratory chain electrons. Thus protects these proteins from oxidative-stress damage caused by reactive species of oxygen and chlorine generated by the host defense mechanisms. MsrPQ is essential for the maintenance of envelope integrity under bleach stress, rescuing a wide series of structurally unrelated periplasmic proteins from methionine oxidation. MsrQ provides electrons for reduction to the reductase catalytic subunit MsrP, using the quinone pool of the respiratory chain. This Pectobacterium atrosepticum (strain SCRI 1043 / ATCC BAA-672) (Erwinia carotovora subsp. atroseptica) protein is Protein-methionine-sulfoxide reductase heme-binding subunit MsrQ.